Here is a 414-residue protein sequence, read N- to C-terminus: Nucleoporin NUP42 (414 aa).

A C3H1-type zinc finger spans residues 1 to 25; it reads MPVCNFFLQGRCRYGDTCWNEHPTG. Disordered regions lie at residues 24–73 and 200–221; these read TGGR…RGAA and PPAS…TSGF. FG repeat units lie at residues 43-44, 207-208, 214-215, 221-222, 233-234, 238-239, 257-258, 268-269, 280-281, 306-307, 325-326, 329-330, 335-336, 341-342, 347-348, 351-352, and 362-363; these read FG.

In terms of assembly, probable component of the nuclear pore complex (NPC).

The protein localises to the nucleus. Its subcellular location is the nuclear pore complex. The protein resides in the nucleus membrane. Required for the export of mRNAs containing poly(A) tails from the nucleus into the cytoplasm. In Danio rerio (Zebrafish), this protein is Nucleoporin NUP42 (nup42).